The sequence spans 98 residues: Large ribosomal subunit protein uL23 (98 aa).

Belongs to the universal ribosomal protein uL23 family. In terms of assembly, part of the 50S ribosomal subunit. Contacts protein L29, and trigger factor when it is bound to the ribosome.

One of the early assembly proteins it binds 23S rRNA. One of the proteins that surrounds the polypeptide exit tunnel on the outside of the ribosome. Forms the main docking site for trigger factor binding to the ribosome. The protein is Large ribosomal subunit protein uL23 of Rickettsia peacockii (strain Rustic).